The primary structure comprises 373 residues: tRNA-specific 2-thiouridylase MnmA (373 aa).

Residues 12–19 and M38 each bind ATP; that span reads GMSGGVDS. Positions 98 to 100 are interaction with target base in tRNA; that stretch reads NPD. C103 serves as the catalytic Nucleophile. A disulfide bond links C103 and C200. ATP is bound at residue G127. Residues 150-152 form an interaction with tRNA region; sequence KDQ. The active-site Cysteine persulfide intermediate is C200. The interval 312-313 is interaction with tRNA; sequence RY.

The protein belongs to the MnmA/TRMU family.

It localises to the cytoplasm. The catalysed reaction is S-sulfanyl-L-cysteinyl-[protein] + uridine(34) in tRNA + AH2 + ATP = 2-thiouridine(34) in tRNA + L-cysteinyl-[protein] + A + AMP + diphosphate + H(+). Its function is as follows. Catalyzes the 2-thiolation of uridine at the wobble position (U34) of tRNA, leading to the formation of s(2)U34. This is tRNA-specific 2-thiouridylase MnmA from Streptococcus pyogenes serotype M6 (strain ATCC BAA-946 / MGAS10394).